Reading from the N-terminus, the 244-residue chain is 3-deoxy-manno-octulosonate cytidylyltransferase (244 aa).

Belongs to the KdsB family.

The protein resides in the cytoplasm. It carries out the reaction 3-deoxy-alpha-D-manno-oct-2-ulosonate + CTP = CMP-3-deoxy-beta-D-manno-octulosonate + diphosphate. Its pathway is nucleotide-sugar biosynthesis; CMP-3-deoxy-D-manno-octulosonate biosynthesis; CMP-3-deoxy-D-manno-octulosonate from 3-deoxy-D-manno-octulosonate and CTP: step 1/1. It functions in the pathway bacterial outer membrane biogenesis; lipopolysaccharide biosynthesis. Functionally, activates KDO (a required 8-carbon sugar) for incorporation into bacterial lipopolysaccharide in Gram-negative bacteria. In Wolinella succinogenes (strain ATCC 29543 / DSM 1740 / CCUG 13145 / JCM 31913 / LMG 7466 / NCTC 11488 / FDC 602W) (Vibrio succinogenes), this protein is 3-deoxy-manno-octulosonate cytidylyltransferase.